We begin with the raw amino-acid sequence, 259 residues long: HTH-type quorum sensing-dependent transcriptional regulator VjbR (259 aa).

The tract at residues 76 to 179 (KNYFAIDPVF…AGIIHGTVCG (104 aa)) is C12-HSL binding. The HTH luxR-type domain maps to 183 to 248 (ANSVASLLTP…SAVATALSLG (66 aa)). Residues 207 to 226 (DGEIAEILSIARWTVVTYLQ) constitute a DNA-binding region (H-T-H motif).

Its function is as follows. Transcriptional regulator involved in the global control of Brucella gene expression. Mediates the effects of the quorum sensing autoinducer C12-HSL (N-dodecanoyl-homoserine lactone) on a large and diverse number of genes. The sequence is that of HTH-type quorum sensing-dependent transcriptional regulator VjbR (vjbR) from Brucella ovis (strain ATCC 25840 / 63/290 / NCTC 10512).